The primary structure comprises 706 residues: Dual specificity calcium/calmodulin-dependent 3',5'-cyclic nucleotide phosphodiesterase 1C (706 aa).

The residue at position 1 (Met-1) is an N-acetylmethionine. The interval Glu-123–Arg-146 is calmodulin-binding. Positions Val-151–Glu-528 constitute a PDEase domain. Residue His-228 is the Proton donor of the active site. Positions 232, 268, 269, and 376 each coordinate Zn(2+). Asp-269 contacts Mg(2+). 2 disordered regions span residues Leu-453–Ser-497 and Lys-524–Pro-655. Composition is skewed to polar residues over residues Glu-456–Ser-476 and Val-483–Ser-497. Composition is skewed to basic and acidic residues over residues Lys-524–Ser-554, Arg-580–Glu-597, and Asp-603–Lys-630. Residues Ala-638–Ile-647 show a composition bias toward polar residues.

The protein belongs to the cyclic nucleotide phosphodiesterase family. PDE1 subfamily. As to quaternary structure, homodimer. The cofactor is Zn(2+). Mg(2+) is required as a cofactor. In terms of tissue distribution, highly expressed in testis and at moderate levels in heart. As to expression, expressed at a moderate level in brain, the cerebellum, testis, heart and olfactory epithelium. Highly expressed in olfactory epithelium and at very low levels, if any, in other tissues. In the cochlea, expressed in the inner and outer hair cells (at protein level). In the brain, highly expressed in the neurons of the granule layer of the cerebellum, some Purkinje cells, the central amygdaloid nucleus, and the interpolar spinal trigem nucleus and, at moderate levels, in the glomerular and external plexiform layer of the olfactory bulb as well as in parts of the caudate-putamen and olfactory tubercle.

Its subcellular location is the lysosome. It carries out the reaction a nucleoside 3',5'-cyclic phosphate + H2O = a nucleoside 5'-phosphate + H(+). It catalyses the reaction 3',5'-cyclic GMP + H2O = GMP + H(+). The enzyme catalyses 3',5'-cyclic AMP + H2O = AMP + H(+). With respect to regulation, type I PDE are activated by the binding of calmodulin in the presence of Ca(2+). Different splice variants may have different sensitivities to Ca(2+). Exhibits a higher sensitivity to Ca(2+) stimulation than isoforms 1 and 2. Functionally, calmodulin-dependent cyclic nucleotide phosphodiesterase with a dual specificity for cAMP and cGMP, which are key regulators of many important physiological processes. Exhibits high affinity for both cAMP and cGMP. Modulates the amplitude and duration of the cAMP signal in sensory cilia in response to odorant stimulation, hence contributing to the generation of action potentials. Regulates smooth muscle cell proliferation. Regulates the stability of growth factor receptors, including PDGFRB. The chain is Dual specificity calcium/calmodulin-dependent 3',5'-cyclic nucleotide phosphodiesterase 1C from Mus musculus (Mouse).